Consider the following 255-residue polypeptide: Type III pantothenate kinase (255 aa).

Position 6–13 (6–13 (DIGNSNID)) interacts with ATP. 107 to 110 (GADL) contacts substrate. The Proton acceptor role is filled by aspartate 109. Position 129 (aspartate 129) interacts with K(+). Threonine 132 serves as a coordination point for ATP. Residue threonine 183 coordinates substrate.

This sequence belongs to the type III pantothenate kinase family. As to quaternary structure, homodimer. The cofactor is NH4(+). K(+) serves as cofactor.

Its subcellular location is the cytoplasm. The enzyme catalyses (R)-pantothenate + ATP = (R)-4'-phosphopantothenate + ADP + H(+). The protein operates within cofactor biosynthesis; coenzyme A biosynthesis; CoA from (R)-pantothenate: step 1/5. In terms of biological role, catalyzes the phosphorylation of pantothenate (Pan), the first step in CoA biosynthesis. This is Type III pantothenate kinase from Dictyoglomus turgidum (strain DSM 6724 / Z-1310).